The chain runs to 132 residues: Aspartate 1-decarboxylase (132 aa).

Serine 25 acts as the Schiff-base intermediate with substrate; via pyruvic acid in catalysis. Pyruvic acid (Ser) is present on serine 25. Threonine 57 serves as a coordination point for substrate. Tyrosine 58 functions as the Proton donor in the catalytic mechanism. 73 to 75 (GAA) provides a ligand contact to substrate.

Belongs to the PanD family. In terms of assembly, heterooctamer of four alpha and four beta subunits. The cofactor is pyruvate. Post-translationally, is synthesized initially as an inactive proenzyme, which is activated by self-cleavage at a specific serine bond to produce a beta-subunit with a hydroxyl group at its C-terminus and an alpha-subunit with a pyruvoyl group at its N-terminus.

It localises to the cytoplasm. The enzyme catalyses L-aspartate + H(+) = beta-alanine + CO2. The protein operates within cofactor biosynthesis; (R)-pantothenate biosynthesis; beta-alanine from L-aspartate: step 1/1. Its function is as follows. Catalyzes the pyruvoyl-dependent decarboxylation of aspartate to produce beta-alanine. The sequence is that of Aspartate 1-decarboxylase from Heliobacterium modesticaldum (strain ATCC 51547 / Ice1).